The sequence spans 89 residues: Small ribosomal subunit protein uS15 (89 aa).

This sequence belongs to the universal ribosomal protein uS15 family. In terms of assembly, part of the 30S ribosomal subunit. Forms a bridge to the 50S subunit in the 70S ribosome, contacting the 23S rRNA.

In terms of biological role, one of the primary rRNA binding proteins, it binds directly to 16S rRNA where it helps nucleate assembly of the platform of the 30S subunit by binding and bridging several RNA helices of the 16S rRNA. Functionally, forms an intersubunit bridge (bridge B4) with the 23S rRNA of the 50S subunit in the ribosome. The sequence is that of Small ribosomal subunit protein uS15 from Azoarcus sp. (strain BH72).